The following is a 503-amino-acid chain: ATP synthase subunit alpha (503 aa).

169 to 176 provides a ligand contact to ATP; sequence GDRKTGKT.

Belongs to the ATPase alpha/beta chains family. In terms of assembly, F-type ATPases have 2 components, CF(1) - the catalytic core - and CF(0) - the membrane proton channel. CF(1) has five subunits: alpha(3), beta(3), gamma(1), delta(1), epsilon(1). CF(0) has three main subunits: a(1), b(2) and c(9-12). The alpha and beta chains form an alternating ring which encloses part of the gamma chain. CF(1) is attached to CF(0) by a central stalk formed by the gamma and epsilon chains, while a peripheral stalk is formed by the delta and b chains.

It is found in the cell membrane. It catalyses the reaction ATP + H2O + 4 H(+)(in) = ADP + phosphate + 5 H(+)(out). In terms of biological role, produces ATP from ADP in the presence of a proton gradient across the membrane. The alpha chain is a regulatory subunit. This Lactobacillus helveticus (strain DPC 4571) protein is ATP synthase subunit alpha.